The sequence spans 312 residues: Ornithine carbamoyltransferase (312 aa).

Carbamoyl phosphate is bound by residues Ser57–Thr60, Gln84, Arg108, and His135–Gln138. Residues Asn166, Asp226, and Ser230–Met231 contribute to the L-ornithine site. Carbamoyl phosphate-binding positions include Cys265–Leu266 and Arg293.

It belongs to the aspartate/ornithine carbamoyltransferase superfamily. OTCase family.

Its subcellular location is the cytoplasm. The catalysed reaction is carbamoyl phosphate + L-ornithine = L-citrulline + phosphate + H(+). The protein operates within amino-acid biosynthesis; L-arginine biosynthesis; L-arginine from L-ornithine and carbamoyl phosphate: step 1/3. In terms of biological role, reversibly catalyzes the transfer of the carbamoyl group from carbamoyl phosphate (CP) to the N(epsilon) atom of ornithine (ORN) to produce L-citrulline. The protein is Ornithine carbamoyltransferase of Brucella suis biovar 1 (strain 1330).